Consider the following 279-residue polypeptide: Putative pyruvate, phosphate dikinase regulatory protein (279 aa).

153-160 (GVSRTSKT) contacts ADP.

Belongs to the pyruvate, phosphate/water dikinase regulatory protein family. PDRP subfamily.

It carries out the reaction N(tele)-phospho-L-histidyl/L-threonyl-[pyruvate, phosphate dikinase] + ADP = N(tele)-phospho-L-histidyl/O-phospho-L-threonyl-[pyruvate, phosphate dikinase] + AMP + H(+). It catalyses the reaction N(tele)-phospho-L-histidyl/O-phospho-L-threonyl-[pyruvate, phosphate dikinase] + phosphate + H(+) = N(tele)-phospho-L-histidyl/L-threonyl-[pyruvate, phosphate dikinase] + diphosphate. In terms of biological role, bifunctional serine/threonine kinase and phosphorylase involved in the regulation of the pyruvate, phosphate dikinase (PPDK) by catalyzing its phosphorylation/dephosphorylation. The polypeptide is Putative pyruvate, phosphate dikinase regulatory protein (Rhodopseudomonas palustris (strain BisA53)).